The primary structure comprises 329 residues: DNA-directed RNA polymerase subunit alpha (329 aa).

The interval 1-231 (MQTTLLKPKT…EQLAVFAQLE (231 aa)) is alpha N-terminal domain (alpha-NTD). The tract at residues 249 to 329 (FDPILLRPVD…SWPPAGLDKR (81 aa)) is alpha C-terminal domain (alpha-CTD).

The protein belongs to the RNA polymerase alpha chain family. Homodimer. The RNAP catalytic core consists of 2 alpha, 1 beta, 1 beta' and 1 omega subunit. When a sigma factor is associated with the core the holoenzyme is formed, which can initiate transcription.

It catalyses the reaction RNA(n) + a ribonucleoside 5'-triphosphate = RNA(n+1) + diphosphate. In terms of biological role, DNA-dependent RNA polymerase catalyzes the transcription of DNA into RNA using the four ribonucleoside triphosphates as substrates. The sequence is that of DNA-directed RNA polymerase subunit alpha from Variovorax paradoxus (strain S110).